The chain runs to 400 residues: Argininosuccinate synthase (400 aa).

ATP is bound at residue 9–17; it reads AYSGGLDTS. Tyrosine 87 is an L-citrulline binding site. Glycine 117 is a binding site for ATP. The L-aspartate site is built by threonine 119, asparagine 123, and aspartate 124. L-citrulline is bound at residue asparagine 123. L-citrulline-binding residues include arginine 127, serine 176, serine 185, glutamate 261, and tyrosine 273.

This sequence belongs to the argininosuccinate synthase family. Type 1 subfamily. Homotetramer.

The protein localises to the cytoplasm. It catalyses the reaction L-citrulline + L-aspartate + ATP = 2-(N(omega)-L-arginino)succinate + AMP + diphosphate + H(+). Its pathway is amino-acid biosynthesis; L-arginine biosynthesis; L-arginine from L-ornithine and carbamoyl phosphate: step 2/3. This is Argininosuccinate synthase from Chlorobium luteolum (strain DSM 273 / BCRC 81028 / 2530) (Pelodictyon luteolum).